A 364-amino-acid polypeptide reads, in one-letter code: DNA replication and repair protein RecF (364 aa).

ATP is bound at residue 23–30 (GPNGIGKS).

It belongs to the RecF family.

Its subcellular location is the cytoplasm. In terms of biological role, the RecF protein is involved in DNA metabolism; it is required for DNA replication and normal SOS inducibility. RecF binds preferentially to single-stranded, linear DNA. It also seems to bind ATP. In Synechococcus sp. (strain CC9605), this protein is DNA replication and repair protein RecF.